The sequence spans 202 residues: Holliday junction resolvase RecU (202 aa).

Mg(2+)-binding residues include threonine 85, aspartate 87, glutamate 100, and glutamine 119.

Belongs to the RecU family. Mg(2+) serves as cofactor.

It localises to the cytoplasm. It carries out the reaction Endonucleolytic cleavage at a junction such as a reciprocal single-stranded crossover between two homologous DNA duplexes (Holliday junction).. In terms of biological role, endonuclease that resolves Holliday junction intermediates in genetic recombination. Cleaves mobile four-strand junctions by introducing symmetrical nicks in paired strands. Promotes annealing of linear ssDNA with homologous dsDNA. Required for DNA repair, homologous recombination and chromosome segregation. The protein is Holliday junction resolvase RecU of Streptococcus equi subsp. equi (strain 4047).